Here is a 371-residue protein sequence, read N- to C-terminus: DNA replication and repair protein RecF (371 aa).

30–37 (GSNGQGKT) is a binding site for ATP.

This sequence belongs to the RecF family.

The protein resides in the cytoplasm. The RecF protein is involved in DNA metabolism; it is required for DNA replication and normal SOS inducibility. RecF binds preferentially to single-stranded, linear DNA. It also seems to bind ATP. In Acidothermus cellulolyticus (strain ATCC 43068 / DSM 8971 / 11B), this protein is DNA replication and repair protein RecF.